The sequence spans 248 residues: N-acylneuraminate-9-phosphatase (248 aa).

Position 12 (Asp12) interacts with Mg(2+). Positions 13, 14, 131, 132, and 164 each coordinate phosphate. Mg(2+) is bound at residue Asp14. Asp189 lines the Mg(2+) pocket.

Belongs to the HAD-like hydrolase superfamily. NANP family. It depends on Mg(2+) as a cofactor.

The catalysed reaction is N-acetylneuraminate 9-phosphate + H2O = N-acetylneuraminate + phosphate. It catalyses the reaction N-glycoloylneuraminate 9-phosphate + H2O = N-glycoloylneuraminate + phosphate. The protein operates within amino-sugar metabolism; N-acetylneuraminate biosynthesis. Inhibited by calcium. Inhibited by vanadate, sodium orthovanadate and phosphonate. Its function is as follows. Catalyzes the dephosphorylation of N-acylneuraminate 9-phosphate (Neu5Ac-9-P) to N-acetylneuraminic acid (Neu5Ac or sialic acid). Can also use N-glycoloylneuraminate 9-phosphate as substrate. This Rattus norvegicus (Rat) protein is N-acylneuraminate-9-phosphatase.